A 141-amino-acid polypeptide reads, in one-letter code: Auxin-responsive protein SAUR63 (141 aa).

Belongs to the ARG7 family. Expressed in hypocotyls, cotyledons, petioles, young rosette leaves, apical portion of inflorescence stems, stamen filaments and petals.

The protein resides in the cell membrane. Its function is as follows. May promote auxin-stimulated organ elongation, such as hypocotyls, stamen filaments and petals. In Arabidopsis thaliana (Mouse-ear cress), this protein is Auxin-responsive protein SAUR63.